The sequence spans 117 residues: Large ribosomal subunit protein bL20c (117 aa).

This sequence belongs to the bacterial ribosomal protein bL20 family.

It localises to the plastid. It is found in the chloroplast. Binds directly to 23S ribosomal RNA and is necessary for the in vitro assembly process of the 50S ribosomal subunit. It is not involved in the protein synthesizing functions of that subunit. This chain is Large ribosomal subunit protein bL20c, found in Drimys granadensis.